The sequence spans 425 residues: MFYKEENFKKTEIGEIPEDWEIVELKDVCKKIKAGGTPKTSVEEYYKNGTIPFVKIEDITNSNKYLTNTKIKITEEGLNNSNAWIVPKNSVLFAMYGSIGETAINKIEVATNQAILGIIPKDNILESEFLYYILAKNKNYYSKLGMQTTQKNLNAQIVKSFKIPLPPLEEQKQIAKILTKIDEGIEIIEKSINKLERIKKGLMHKLLTKGIGHSRFKKSEIGEIPEDWEVFEIKDIFEVKTGTTPSTKKSEYWENGEINWITPLDLSRLNEKIYIGSSERKVTKIALEKCNLNLIPKGSIIISTRAPVGYVAVLTVESTFNQGCKGLFQKNNDSVNTEFYAYYLKFKKNLLENLSGGSTFKELSKSMLENFKIPLPPLEEQKQIAKILSSVDKSIELKKQKKEKLQRMKKKIMELLLTGKVRVKT.

The tract at residues 9 to 168 is target recognition domain 1; the sequence is KKTEIGEIPE…KSFKIPLPPL (160 aa). The interval 169-208 is central conserved region (CCR); it reads EEQKQIAKILTKIDEGIEIIEKSINKLERIKKGLMHKLLT. The stretch at 169-208 forms a coiled coil; that stretch reads EEQKQIAKILTKIDEGIEIIEKSINKLERIKKGLMHKLLT. The tract at residues 209 to 368 is target recognition domain 2; that stretch reads KGIGHSRFKK…TFKELSKSML (160 aa). A coiled-coil region spans residues 369 to 418; the sequence is ENFKIPLPPLEEQKQIAKILSSVDKSIELKKQKKEKLQRMKKKIMELLLT. Residues 369-418 are distal conserved region (DCR); sequence ENFKIPLPPLEEQKQIAKILSSVDKSIELKKQKKEKLQRMKKKIMELLLT.

It belongs to the type-I restriction system S methylase family. As to quaternary structure, the type I restriction/modification system is composed of three polypeptides R, M and S.

In terms of biological role, the specificity (S) subunit of a type I restriction enzyme; this subunit dictates DNA sequence specificity. The M and S subunits together form a methyltransferase (MTase) that methylates A-3 on the top and bottom strands of the sequence 5'-CAAN(7)TGG-3'. In the presence of the R subunit the complex can also act as an endonuclease, binding to the same target sequence but cutting the DNA some distance from this site. Whether the DNA is cut or modified depends on the methylation state of the target sequence. When the target site is unmodified, the DNA is cut. When the target site is hemimethylated, the complex acts as a maintenance MTase modifying the DNA so that both strands become methylated. After locating a non-methylated recognition site, the enzyme complex serves as a molecular motor that translocates DNA in an ATP-dependent manner until a collision occurs that triggers cleavage. The sequence is that of Type I restriction enzyme MjaVII specificity subunit from Methanocaldococcus jannaschii (strain ATCC 43067 / DSM 2661 / JAL-1 / JCM 10045 / NBRC 100440) (Methanococcus jannaschii).